A 188-amino-acid chain; its full sequence is uncharacterized protein (188 aa).

Residues Thr-136–Trp-156 traverse the membrane as a helical segment.

The protein resides in the host membrane. This is an uncharacterized protein from Magallana gigas (Pacific oyster).